Consider the following 187-residue polypeptide: Elongation factor P (187 aa).

The protein belongs to the elongation factor P family.

The protein resides in the cytoplasm. Its pathway is protein biosynthesis; polypeptide chain elongation. In terms of biological role, involved in peptide bond synthesis. Stimulates efficient translation and peptide-bond synthesis on native or reconstituted 70S ribosomes in vitro. Probably functions indirectly by altering the affinity of the ribosome for aminoacyl-tRNA, thus increasing their reactivity as acceptors for peptidyl transferase. This chain is Elongation factor P, found in Gloeobacter violaceus (strain ATCC 29082 / PCC 7421).